Here is a 262-residue protein sequence, read N- to C-terminus: Hydroxyethylthiazole kinase (262 aa).

Met39 contributes to the substrate binding site. Residues Lys115 and Thr160 each contribute to the ATP site. Gly187 provides a ligand contact to substrate.

The protein belongs to the Thz kinase family. The cofactor is Mg(2+).

It catalyses the reaction 5-(2-hydroxyethyl)-4-methylthiazole + ATP = 4-methyl-5-(2-phosphooxyethyl)-thiazole + ADP + H(+). The protein operates within cofactor biosynthesis; thiamine diphosphate biosynthesis; 4-methyl-5-(2-phosphoethyl)-thiazole from 5-(2-hydroxyethyl)-4-methylthiazole: step 1/1. Its function is as follows. Catalyzes the phosphorylation of the hydroxyl group of 4-methyl-5-beta-hydroxyethylthiazole (THZ). The polypeptide is Hydroxyethylthiazole kinase (Staphylococcus epidermidis (strain ATCC 12228 / FDA PCI 1200)).